The chain runs to 122 residues: uncharacterized protein (122 aa).

2 helical membrane passes run 36-56 (SVRS…YSQF) and 72-92 (AVFL…FSTD).

The protein resides in the membrane. This is an uncharacterized protein from Saccharomyces cerevisiae (strain ATCC 204508 / S288c) (Baker's yeast).